A 94-amino-acid chain; its full sequence is Co-chaperonin GroES (94 aa).

The protein belongs to the GroES chaperonin family. Heptamer of 7 subunits arranged in a ring. Interacts with the chaperonin GroEL.

Its subcellular location is the cytoplasm. In terms of biological role, together with the chaperonin GroEL, plays an essential role in assisting protein folding. The GroEL-GroES system forms a nano-cage that allows encapsulation of the non-native substrate proteins and provides a physical environment optimized to promote and accelerate protein folding. GroES binds to the apical surface of the GroEL ring, thereby capping the opening of the GroEL channel. This is Co-chaperonin GroES from Geobacillus thermodenitrificans (strain NG80-2).